The primary structure comprises 325 residues: MYIAVPAEILGIILPLLLGVAFLVLAERKVMAFVQRRKGPDVVGSFGLLQPLADGLKLILKEPISPSSANFFLFRMAPVATFMLSLVAWAVVPFDYGMVLSDLNIGLLYLFAISSLGVYGIIIAGWSSISKYAFLGALRSAAQMVSYEVSIGLILITVLICVGSCNLSEIVMAQKQIWFGIPLFPVLVMFFISCLAETNRAPFDLPEAEAELVAGYNVEYSSMGFALFFLGEYANMILMSGLCTLFFLGGWLPILDLPIFKKIPGSIWFSIKVLFFLFLYIWVRAAFPRYRYDQLMGLGWKVFLPLSLARVVPVSGLLVTFQWLP.

8 consecutive transmembrane segments (helical) span residues 5-25 (VPAE…FLVL), 68-88 (SANF…SLVA), 105-125 (IGLL…IIAG), 144-164 (MVSY…CVGS), 177-197 (IWFG…CLAE), 227-247 (LFFL…TLFF), 263-283 (IPGS…YIWV), and 302-322 (VFLP…VTFQ).

Belongs to the complex I subunit 1 family. As to quaternary structure, complex I is composed of at least 49 different subunits.

The protein resides in the mitochondrion inner membrane. The enzyme catalyses a ubiquinone + NADH + 5 H(+)(in) = a ubiquinol + NAD(+) + 4 H(+)(out). In terms of biological role, core subunit of the mitochondrial membrane respiratory chain NADH dehydrogenase (Complex I) that is believed to belong to the minimal assembly required for catalysis. Complex I functions in the transfer of electrons from NADH to the respiratory chain. The immediate electron acceptor for the enzyme is believed to be ubiquinone. This is NADH-ubiquinone oxidoreductase chain 1 (ND1) from Arabidopsis thaliana (Mouse-ear cress).